A 600-amino-acid polypeptide reads, in one-letter code: Oligopeptide-binding protein OppA (600 aa).

The signal sequence occupies residues 1–22; it reads MKKLKVTLLASSVVLAAALLSA. Cysteine 23 carries N-palmitoyl cysteine lipidation. The S-diacylglycerol cysteine moiety is linked to residue cysteine 23.

It belongs to the bacterial solute-binding protein 5 family. The complex is composed of two ATP-binding proteins (OppD and OppF), two transmembrane proteins (OppB and OppC) and a solute-binding protein (OppA).

It localises to the cell membrane. In terms of biological role, part of the ABC transporter complex OppABCDF involved in the uptake of oligopeptides. This is Oligopeptide-binding protein OppA (oppA) from Lactococcus lactis subsp. lactis (strain IL1403) (Streptococcus lactis).